Consider the following 1013-residue polypeptide: MDIS1-interacting receptor like kinase 1 (1013 aa).

The signal sequence occupies residues 1-23 (MKMKIIVLFLYYCYIGSTSSVLA). Topologically, residues 24-633 (SIDNVNELSV…SSHSSLHGKR (610 aa)) are extracellular. 7 N-linked (GlcNAc...) asparagine glycosylation sites follow: Asn61, Asn82, Asn101, Asn137, Asn146, Asn151, and Asn155. 22 LRR repeats span residues 70 to 94 (NGNV…ISQL), 95 to 117 (SSLV…SIPP), 119 to 137 (KSID…LFSN), 139 to 163 (SLGL…LGNL), 164 to 186 (VSLE…SFKN), 187 to 213 (LQKL…QLPS), 215 to 234 (ETAI…EFGN), 235 to 259 (INSL…LGKL), 260 to 283 (KSLE…IGSI), 284 to 307 (TTLK…ITKL), 308 to 331 (KNLQ…ISSL), 333 to 355 (QLQV…LGKN), 357 to 379 (PLQW…LCNK), 381 to 403 (NLTK…LSTC), 405 to 426 (SLVR…GFGK), 427 to 451 (LEKL…ISDS), 453 to 475 (SLSF…ILSI), 477 to 498 (NLQA…QFQD), 499 to 523 (CPSL…IASC), 525 to 547 (KLVS…ITTM), 548 to 571 (SALA…IGTS), and 573 to 595 (ALEL…GFLK). Asn199 is a glycosylation site (N-linked (GlcNAc...) asparagine). The N-linked (GlcNAc...) asparagine glycan is linked to Asn271. Asn341 is a glycosylation site (N-linked (GlcNAc...) asparagine). 3 N-linked (GlcNAc...) asparagine glycosylation sites follow: Asn381, Asn389, and Asn417. N-linked (GlcNAc...) asparagine glycosylation is found at Asn535, Asn557, and Asn578. A helical transmembrane segment spans residues 634-654 (IVAGWLIGIASVLALGILTIV). Residues 655-1013 (TRTLYKKWYS…FSTSPVNGLL (359 aa)) are Cytoplasmic-facing. Thr691 is modified (phosphothreonine). One can recognise a Protein kinase domain in the interval 699-983 (IKESNMIGMG…SMLGEAKPRR (285 aa)). ATP is bound by residues 705-713 (IGMGATGIV) and Lys728. Thr710 is subject to Phosphothreonine; by autocatalysis. Phosphothreonine; by autocatalysis occurs at positions 741 and 742. 2 positions are modified to phosphotyrosine: Tyr777 and Tyr818. The Proton acceptor role is filled by Asp831. Thr862 bears the Phosphothreonine; by autocatalysis mark. Ser864 is subject to Phosphoserine; by autocatalysis. Tyr872 carries the post-translational modification Phosphotyrosine. Residue Tyr879 is modified to Phosphotyrosine; by autocatalysis. Phosphothreonine; by autocatalysis is present on residues Thr880 and Thr992. The tract at residues 976-1013 (LGEAKPRRKSNSNEENTSRSLAEKHSSVFSTSPVNGLL) is disordered. Residues 1002–1013 (SVFSTSPVNGLL) show a composition bias toward polar residues.

It belongs to the protein kinase superfamily. Ser/Thr protein kinase family. As to quaternary structure, homodimer. Interacts with MDIS1 and LURE1.2. Post-translationally, autophosphorylation induced by the interaction with LURE1.2. In terms of tissue distribution, expressed in pollen tubes.

The protein resides in the cell membrane. The catalysed reaction is L-seryl-[protein] + ATP = O-phospho-L-seryl-[protein] + ADP + H(+). It carries out the reaction L-threonyl-[protein] + ATP = O-phospho-L-threonyl-[protein] + ADP + H(+). In terms of biological role, involved in the regulation of procambium maintenance and polarity during vascular-tissue development. Involved in the pollen tube perception of the female signal. Phosphorylates MDSI1. The protein is MDIS1-interacting receptor like kinase 1 of Arabidopsis thaliana (Mouse-ear cress).